A 262-amino-acid polypeptide reads, in one-letter code: Glutamate racemase (262 aa).

Substrate-binding positions include 5–6 and 37–38; these read DS and YG. The active-site Proton donor/acceptor is the cysteine 69. Residue 70–71 coordinates substrate; that stretch reads NT. Catalysis depends on cysteine 181, which acts as the Proton donor/acceptor. 182 to 183 lines the substrate pocket; the sequence is TH.

This sequence belongs to the aspartate/glutamate racemases family.

The enzyme catalyses L-glutamate = D-glutamate. It participates in cell wall biogenesis; peptidoglycan biosynthesis. Its function is as follows. Provides the (R)-glutamate required for cell wall biosynthesis. The polypeptide is Glutamate racemase (Buchnera aphidicola subsp. Acyrthosiphon pisum (strain 5A)).